A 261-amino-acid chain; its full sequence is Carbonic anhydrase 1 (261 aa).

The interval 1–40 is disordered; it reads MASPDWGYDDKNGPEQWSKLYPIANGNNQSPVDIKTSETK. Ala-2 is modified (N-acetylalanine). The Alpha-carbonic anhydrase domain occupies 4 to 261; it reads PDWGYDDKNG…LKGRTVRASF (258 aa). The active-site Proton donor/acceptor is His-65. Residues His-95, His-97, and His-120 each coordinate Zn(2+). Residues Thr-200 and 200–201 each bind substrate; that span reads TH. The tract at residues 241–261 is disordered; that stretch reads PMQHNNRPTQPLKGRTVRASF.

The protein belongs to the alpha-carbonic anhydrase family. The cofactor is Zn(2+).

It localises to the cytoplasm. The catalysed reaction is hydrogencarbonate + H(+) = CO2 + H2O. The enzyme catalyses urea = cyanamide + H2O. With respect to regulation, inhibited by acetazolamide. In terms of biological role, catalyzes the reversible hydration of carbon dioxide. Can hydrate cyanamide to urea. In Pan troglodytes (Chimpanzee), this protein is Carbonic anhydrase 1 (CA1).